We begin with the raw amino-acid sequence, 440 residues long: tRNA(Ile)-lysidine synthase (440 aa).

Residue 29–34 coordinates ATP; the sequence is SGGLDS.

It belongs to the tRNA(Ile)-lysidine synthase family.

It localises to the cytoplasm. The enzyme catalyses cytidine(34) in tRNA(Ile2) + L-lysine + ATP = lysidine(34) in tRNA(Ile2) + AMP + diphosphate + H(+). In terms of biological role, ligates lysine onto the cytidine present at position 34 of the AUA codon-specific tRNA(Ile) that contains the anticodon CAU, in an ATP-dependent manner. Cytidine is converted to lysidine, thus changing the amino acid specificity of the tRNA from methionine to isoleucine. The protein is tRNA(Ile)-lysidine synthase of Pectobacterium atrosepticum (strain SCRI 1043 / ATCC BAA-672) (Erwinia carotovora subsp. atroseptica).